The primary structure comprises 455 residues: Proline--tRNA ligase (455 aa).

L-proline-binding residues include Thr101, Glu103, and Arg132. Residues Arg132, Glu134, Gln216, and Thr219 each coordinate ATP. His221 contributes to the L-proline binding site. ATP is bound by residues Ser253 and Arg255. Positions 329 to 359 (EIKGVPLRIEVGPKDIENKKITLFRRDTMEK) are interaction with tRNA.

Belongs to the class-II aminoacyl-tRNA synthetase family. ProS type 3 subfamily. In terms of assembly, homodimer. The dimer is functionally asymmetric: only one of the two active sites at a time is able to form prolyl-adenylate, and only one tRNA molecule binds per dimer.

It is found in the cytoplasm. It carries out the reaction tRNA(Pro) + L-proline + ATP = L-prolyl-tRNA(Pro) + AMP + diphosphate. With respect to regulation, inhibited by high concentrations of prolinamide. Functionally, catalyzes the attachment of proline to tRNA(Pro) in a two-step reaction: proline is first activated by ATP to form Pro-AMP and then transferred to the acceptor end of tRNA(Pro). Can inadvertently accommodate and process non-cognate amino acids such as cysteine and alanine. The protein is Proline--tRNA ligase (proS) of Methanocaldococcus jannaschii (strain ATCC 43067 / DSM 2661 / JAL-1 / JCM 10045 / NBRC 100440) (Methanococcus jannaschii).